The chain runs to 436 residues: Tol-Pal system protein TolB (436 aa).

The first 28 residues, 1–28, serve as a signal peptide directing secretion; the sequence is MRSFLKPLLTIAAMALGMTAVIPMPAWA.

This sequence belongs to the TolB family. In terms of assembly, the Tol-Pal system is composed of five core proteins: the inner membrane proteins TolA, TolQ and TolR, the periplasmic protein TolB and the outer membrane protein Pal. They form a network linking the inner and outer membranes and the peptidoglycan layer.

The protein localises to the periplasm. Part of the Tol-Pal system, which plays a role in outer membrane invagination during cell division and is important for maintaining outer membrane integrity. The chain is Tol-Pal system protein TolB from Mesorhizobium japonicum (strain LMG 29417 / CECT 9101 / MAFF 303099) (Mesorhizobium loti (strain MAFF 303099)).